A 636-amino-acid polypeptide reads, in one-letter code: DNA mismatch repair protein MutL (636 aa).

The interval 362 to 393 (RKTPEVHEEAEKPEFLVKQEAKNSEEPKNETE) is disordered. The span at 363–393 (KTPEVHEEAEKPEFLVKQEAKNSEEPKNETE) shows a compositional bias: basic and acidic residues.

Belongs to the DNA mismatch repair MutL/HexB family.

Functionally, this protein is involved in the repair of mismatches in DNA. It is required for dam-dependent methyl-directed DNA mismatch repair. May act as a 'molecular matchmaker', a protein that promotes the formation of a stable complex between two or more DNA-binding proteins in an ATP-dependent manner without itself being part of a final effector complex. The sequence is that of DNA mismatch repair protein MutL from Lactobacillus helveticus (strain DPC 4571).